The following is a 329-amino-acid chain: Acetyl-coenzyme A carboxylase carboxyl transferase subunit alpha (329 aa).

One can recognise a CoA carboxyltransferase C-terminal domain in the interval 40–294 (QLESLASRRR…RAALERHLGE (255 aa)).

Belongs to the AccA family. In terms of assembly, acetyl-CoA carboxylase is a heterohexamer composed of biotin carboxyl carrier protein (AccB), biotin carboxylase (AccC) and two subunits each of ACCase subunit alpha (AccA) and ACCase subunit beta (AccD).

It localises to the cytoplasm. It carries out the reaction N(6)-carboxybiotinyl-L-lysyl-[protein] + acetyl-CoA = N(6)-biotinyl-L-lysyl-[protein] + malonyl-CoA. It functions in the pathway lipid metabolism; malonyl-CoA biosynthesis; malonyl-CoA from acetyl-CoA: step 1/1. In terms of biological role, component of the acetyl coenzyme A carboxylase (ACC) complex. First, biotin carboxylase catalyzes the carboxylation of biotin on its carrier protein (BCCP) and then the CO(2) group is transferred by the carboxyltransferase to acetyl-CoA to form malonyl-CoA. The polypeptide is Acetyl-coenzyme A carboxylase carboxyl transferase subunit alpha (Synechococcus sp. (strain CC9902)).